The primary structure comprises 121 residues: U15-barytoxin-Tl1b (121 aa).

The N-terminal stretch at 1 to 16 (MKLFMVLVASFAFAVA) is a signal peptide. 4 disulfide bridges follow: Cys-54-Cys-72, Cys-65-Cys-78, Cys-69-Cys-119, and Cys-71-Cys-90.

This sequence belongs to the neurotoxin 03 (Tx2) family. 03 subfamily. In terms of tissue distribution, expressed by the venom gland.

It is found in the secreted. Ion channel inhibitor. The chain is U15-barytoxin-Tl1b from Trittame loki (Brush-footed trapdoor spider).